The sequence spans 65 residues: UPF0291 protein BBR47_33060 (65 aa).

This sequence belongs to the UPF0291 family.

The protein resides in the cytoplasm. This is UPF0291 protein BBR47_33060 from Brevibacillus brevis (strain 47 / JCM 6285 / NBRC 100599).